A 382-amino-acid chain; its full sequence is MTPPATPLTPTLQLAHDLIRCRSVTPEDDGCQELMIRRLEAIGFKTERLRFGEVDNFWAIRGGDGPILAFAGHTDVVPTGPETHWNNPPFEPTIIDGMLHGRGAADMKGSLASMVVACENFVARHPNHKGRIAFLITSDEEGPSINGTVKVVEWLEARHTKMTWCIVGEPSSTTRVGDVIKNGRRGSLGGVLKVKGIQGHVAYPHLADNPIHTLAPALAELAAEHWDNGNEFFPATSFQVSNINGGTGATNVIPGEVTVVFNFRFSTELTDAILRERTQAILDKHELKYELEWILSGQPFLTPRGDLVNAVVDAINTATGLDAELSTSGGTSDGRFIAPTGAQVVELGPINATIHKVNECISAEDLNKLTAIYERTLEILLA.

His-73 serves as a coordination point for Zn(2+). The active site involves Asp-75. Asp-106 contacts Zn(2+). Glu-140 acts as the Proton acceptor in catalysis. Zn(2+) is bound by residues Glu-141, Glu-169, and His-355.

Belongs to the peptidase M20A family. DapE subfamily. As to quaternary structure, homodimer. Zn(2+) serves as cofactor. Requires Co(2+) as cofactor.

The enzyme catalyses N-succinyl-(2S,6S)-2,6-diaminopimelate + H2O = (2S,6S)-2,6-diaminopimelate + succinate. It functions in the pathway amino-acid biosynthesis; L-lysine biosynthesis via DAP pathway; LL-2,6-diaminopimelate from (S)-tetrahydrodipicolinate (succinylase route): step 3/3. Its function is as follows. Catalyzes the hydrolysis of N-succinyl-L,L-diaminopimelic acid (SDAP), forming succinate and LL-2,6-diaminopimelate (DAP), an intermediate involved in the bacterial biosynthesis of lysine and meso-diaminopimelic acid, an essential component of bacterial cell walls. This chain is Succinyl-diaminopimelate desuccinylase, found in Cellvibrio japonicus (strain Ueda107) (Pseudomonas fluorescens subsp. cellulosa).